A 255-amino-acid chain; its full sequence is D-aminoacyl-tRNA deacylase (255 aa).

The protein belongs to the DtdA deacylase family. In terms of assembly, monomer. Zn(2+) is required as a cofactor.

The catalysed reaction is a D-aminoacyl-tRNA + H2O = a tRNA + a D-alpha-amino acid + H(+). It catalyses the reaction glycyl-tRNA(Ala) + H2O = tRNA(Ala) + glycine + H(+). In terms of biological role, D-aminoacyl-tRNA deacylase with broad substrate specificity. By recycling D-aminoacyl-tRNA to D-amino acids and free tRNA molecules, this enzyme counteracts the toxicity associated with the formation of D-aminoacyl-tRNA entities in vivo. This Methanocaldococcus jannaschii (strain ATCC 43067 / DSM 2661 / JAL-1 / JCM 10045 / NBRC 100440) (Methanococcus jannaschii) protein is D-aminoacyl-tRNA deacylase.